The sequence spans 96 residues: Putative toxin Y4kP (96 aa).

The protein belongs to the RelE toxin family.

Toxic component of a type II toxin-antitoxin (TA) system. This is Putative toxin Y4kP from Sinorhizobium fredii (strain NBRC 101917 / NGR234).